Here is a 234-residue protein sequence, read N- to C-terminus: Putative gustatory receptor clone PTE38 (234 aa).

The chain crosses the membrane as a helical span at residues 1–11 (MYLFFSNLSFN). At 12-42 (DICIITTTIPKMLMNVQSHDQSITYLGCLSQ) the chain is on the extracellular side. An intrachain disulfide couples C39 to C121. A helical membrane pass occupies residues 43–62 (VYLIVNFGSIESCLLAVMAY). The Cytoplasmic portion of the chain corresponds to 63–84 (DRYVAICHPLKYTVIMNHYFCV). Residues 85-105 (MLLLFACSLALHMCLFHILMV) form a helical membrane-spanning segment. The Extracellular portion of the chain corresponds to 106-138 (LILTFCTKTEIPHFFCELAHIIKLTCSDNFINY). A helical membrane pass occupies residues 139-160 (LLIYTVSVLFFGVHIVGIILSY). The Cytoplasmic segment spans residues 161–182 (IYTVSSVLRMSLLGGMYKAFST). Residues 183 to 202 (CGSHLSVVSLFYGTGFGVHI) form a helical membrane-spanning segment. Residues 203-212 (SSPLTDSPRK) lie on the Extracellular side of the membrane. The helical transmembrane segment at 213–234 (TVVASVMYTVVTQMHGPFIYSL) threads the bilayer.

Belongs to the G-protein coupled receptor 1 family. In terms of tissue distribution, tongue specific.

It is found in the cell membrane. Possible taste receptor. The polypeptide is Putative gustatory receptor clone PTE38 (Rattus norvegicus (Rat)).